The sequence spans 239 residues: Leucine rich adaptor protein 1 (239 aa).

LRR repeat units follow at residues Leu55 to Leu83 and Leu93 to Leu114. Low complexity predominate over residues Ser105–Gly116. The interval Ser105–Arg138 is disordered. Ser118, Ser126, and Ser129 each carry phosphoserine.

As to quaternary structure, forms a tripartite complex with CDC42BPA/CDC42BPB and MYO18A acting as an adapter connecting both. Its binding to CDC42BPA/CDC42BPB results in their activation by abolition of their negative autoregulation. Interacts with CDC42BPA and CDC42BPB. Post-translationally, phosphorylated.

Its subcellular location is the cytoplasm. Its function is as follows. Acts as an activator of the canonical NF-kappa-B pathway and drive the production of pro-inflammatory cytokines. Promotes the antigen (Ag)-presenting and priming function of dendritic cells via the canonical NF-kappa-B pathway. In concert with MYO18A and CDC42BPA/CDC42BPB, is involved in modulating lamellar actomyosin retrograde flow that is crucial to cell protrusion and migration. Activates CDC42BPA/CDC42BPB and targets it to actomyosin through its interaction with MYO18A, leading to MYL9/MLC2 phosphorylation and MYH9/MYH10-dependent actomyosin assembly in the lamella. This Mus musculus (Mouse) protein is Leucine rich adaptor protein 1 (Lurap1).